Here is a 193-residue protein sequence, read N- to C-terminus: Putative 3-methyladenine DNA glycosylase (193 aa).

It belongs to the DNA glycosylase MPG family.

The polypeptide is Putative 3-methyladenine DNA glycosylase (Francisella tularensis subsp. tularensis (strain FSC 198)).